A 268-amino-acid polypeptide reads, in one-letter code: Interleukin-1 beta (268 aa).

Residues 1–116 (MATVPELTSE…TWDDYSLECD (116 aa)) constitute a propeptide that is removed on maturation.

The protein belongs to the IL-1 family. In terms of assembly, monomer. In its precursor form, weakly interacts with full-length MEFV; the mature cytokine does not interact at all. Interacts with integrins ITGAV:ITGBV and ITGA5:ITGB1; integrin-binding is required for IL1B signaling. Interacts with cargo receptor TMED10; the interaction is direct and is required for the secretion of IL1B mature form. Interacts with HSP90AB1; the interaction facilitates cargo translocation into the ERGIC. Interacts with HSP90B1; the interaction facilitates cargo translocation into the ERGIC.

It localises to the cytoplasm. Its subcellular location is the cytosol. It is found in the secreted. The protein resides in the lysosome. The protein localises to the extracellular exosome. Its function is as follows. Potent pro-inflammatory cytokine. Initially discovered as the major endogenous pyrogen, induces prostaglandin synthesis, neutrophil influx and activation, T-cell activation and cytokine production, B-cell activation and antibody production, and fibroblast proliferation and collagen production. Promotes Th17 differentiation of T-cells. Synergizes with IL12/interleukin-12 to induce IFNG synthesis from T-helper 1 (Th1) cells. Plays a role in angiogenesis by inducing VEGF production synergistically with TNF and IL6. Involved in transduction of inflammation downstream of pyroptosis: its mature form is specifically released in the extracellular milieu by passing through the gasdermin-D (GSDMD) pore. This chain is Interleukin-1 beta (IL1B), found in Oryctolagus cuniculus (Rabbit).